Consider the following 279-residue polypeptide: Eukaryotic translation initiation factor 3 subunit G (279 aa).

Disordered regions lie at residues 1–26 (MSTG…IANP), 66–115 (RKNW…KAHE), and 152–171 (TPSG…AAGA). Position 78 is a phosphoserine (Ser-78). Residues 102–115 (KQDEKKEEEDKAHE) show a composition bias toward basic and acidic residues. Residues 152–163 (TPSGTTPEPTSE) are compositionally biased toward low complexity. The RRM domain occupies 197 to 276 (TTLKVSQLNS…LILHLEWSKK (80 aa)).

Belongs to the eIF-3 subunit G family. As to quaternary structure, component of the eukaryotic translation initiation factor 3 (eIF-3) complex.

The protein localises to the cytoplasm. RNA-binding component of the eukaryotic translation initiation factor 3 (eIF-3) complex, which is involved in protein synthesis of a specialized repertoire of mRNAs and, together with other initiation factors, stimulates binding of mRNA and methionyl-tRNAi to the 40S ribosome. The eIF-3 complex specifically targets and initiates translation of a subset of mRNAs involved in cell proliferation. This subunit can bind 18S rRNA. The chain is Eukaryotic translation initiation factor 3 subunit G from Candida albicans (strain SC5314 / ATCC MYA-2876) (Yeast).